A 190-amino-acid chain; its full sequence is Secretory phospholipase A2 (190 aa).

An N-terminal signal peptide occupies residues 1-15 (MKLAYFSSLLPLALA). A disulfide bridge connects residues cysteine 62 and cysteine 78. Alanine 65 contributes to the Ca(2+) binding site. Residue histidine 81 is part of the active site. Aspartate 82 contributes to the Ca(2+) binding site.

The protein belongs to the phospholipase A2 family. Ca(2+) serves as cofactor.

It is found in the lipid droplet. The protein localises to the secreted. It catalyses the reaction a 1,2-diacyl-sn-glycero-3-phosphocholine + H2O = a 1-acyl-sn-glycero-3-phosphocholine + a fatty acid + H(+). Its function is as follows. Secretory phospholipase that catalyzes the calcium-dependent hydrolysis of the 2-acyl groups in 3-sn-phosphoglycerides. Increases the ability to utilize insect-derived nutrients and lipids, and promotes lipid dropplets accumulation. Plays a role in virulence, including more efficient penetration of the insect cuticle and evasion of host immune response by repressing the expression of host immunity genes. This chain is Secretory phospholipase A2, found in Beauveria bassiana (strain ARSEF 2860) (White muscardine disease fungus).